We begin with the raw amino-acid sequence, 583 residues long: Cysteine/serine-rich nuclear protein 1 (583 aa).

Disordered stretches follow at residues 1–79 (MTGL…APRE) and 306–381 (AESL…RSGV). Residues 18-41 (SSSSSSSFSSRLSLSSFPASSASP) show a composition bias toward low complexity. The segment covering 54 to 69 (APQSDQDSCGLQSFTP) has biased composition (polar residues). Low complexity predominate over residues 335-361 (PVSSELGDSSCSSDMTDSSTTLSSGSS). Positions 364 to 373 (PNHPAHPSLP) are enriched in pro residues.

Belongs to the AXUD1 family. In terms of tissue distribution, widely expressed with highest levels in thymus and lung. Low levels detected in naive T-cells.

Its subcellular location is the nucleus. Its function is as follows. Binds to the consensus sequence 5'-AGAGTG-3' and has transcriptional activator activity. May have a tumor-suppressor function. May play a role in apoptosis. The chain is Cysteine/serine-rich nuclear protein 1 (Csrnp1) from Mus musculus (Mouse).